The sequence spans 422 residues: Steroid hormone receptor ERR1 (422 aa).

Residues 1 to 66 (MSSQVVGIEP…EGAGSGEQGS (66 aa)) are disordered. The repressor domain stretch occupies residues 1 to 76 (MSSQVVGIEP…GKLVLSSLPK (76 aa)). A Glycyl lysine isopeptide (Lys-Gly) (interchain with G-Cter in SUMO) cross-link involves residue K14. A phosphoserine mark is found at S19 and S22. The nuclear receptor DNA-binding region spans 76–151 (KRLCLVCGDV…VGMLKEGVRL (76 aa)). NR C4-type zinc fingers lie at residues 79-99 (CLVCGDVASGYHYGVASCEAC) and 115-134 (CPASNECEITKRRRKACQAC). An N6-acetyllysine; by PCAF/KAT2B mark is found at K129, K138, K160, and K162. K189 is covalently cross-linked (Glycyl lysine isopeptide (Lys-Gly) (interchain with G-Cter in SUMO2)). Positions 192 to 420 (PVNALVSHLL…KLFLEMLEAM (229 aa)) constitute an NR LBD domain. A Glycyl lysine isopeptide (Lys-Gly) (interchain with G-Cter in SUMO); alternate cross-link involves residue K402. Residue K402 forms a Glycyl lysine isopeptide (Lys-Gly) (interchain with G-Cter in SUMO2); alternate linkage. Positions 402–422 (KLEGKVPMHKLFLEMLEAMMD) are AF-2 domain.

Belongs to the nuclear hormone receptor family. NR3 subfamily. Binds DNA as a monomer or a homodimer. Interacts (via the AF2 domain) with coactivator PPARGC1A (via the L3 motif); the interaction greatly enhances transcriptional activity of genes involved in energy metabolism. Interacts with PIAS4; the interaction enhances sumoylation. Interacts with MAPK15; promotes re-localization of ESRRA to the cytoplasm through a XPO1-dependent mechanism then inhibits ESRRA transcriptional activity. In terms of processing, phosphorylation on Ser-19 enhances sumoylation on Lys-14 increasing repression of transcriptional activity. Sumoylated with SUMO2. Main site is Lys-14 which is enhanced by phosphorylation on Ser-19, cofactor activation, and by interaction with PIAS4. Sumoylation enhances repression of transcriptional activity, but has no effect on subcellular location nor on DNA binding. Post-translationally, reversibly acetylated. Acetylation by PCAF/KAT2 at Lys-129, Lys-138, Lys-160 and Lys-162 and PCAF/KAT2 decreases transcriptional activity probably by inhibiting DNA-binding activity; deacetylation involves SIRT1 and HDAC8 and increases DNA-binding. Most highly expressed in kidney, heart, and brown adipocytes. Also found in uterus, cervix and vagina.

The protein resides in the nucleus. It is found in the cytoplasm. In terms of biological role, binds to an ERR-alpha response element (ERRE) containing a single consensus half-site, 5'-TNAAGGTCA-3'. Can bind to the medium-chain acyl coenzyme A dehydrogenase (MCAD) response element NRRE-1 and may act as an important regulator of MCAD promoter. Binds to the C1 region of the lactoferrin gene promoter. Requires dimerization and the coactivator, PGC-1A, for full activity. The ERRalpha/PGC1alpha complex is a regulator of energy metabolism. Induces the expression of PERM1 in the skeletal muscle. The chain is Steroid hormone receptor ERR1 (Esrra) from Mus musculus (Mouse).